The following is a 248-amino-acid chain: Pyridoxine 5'-phosphate synthase (248 aa).

Residue asparagine 7 participates in 3-amino-2-oxopropyl phosphate binding. 9–10 (DH) is a binding site for 1-deoxy-D-xylulose 5-phosphate. Residue arginine 18 participates in 3-amino-2-oxopropyl phosphate binding. The active-site Proton acceptor is the histidine 52. 1-deoxy-D-xylulose 5-phosphate-binding residues include arginine 54 and histidine 59. Catalysis depends on glutamate 79, which acts as the Proton acceptor. 1-deoxy-D-xylulose 5-phosphate is bound at residue threonine 109. Histidine 201 acts as the Proton donor in catalysis. 3-amino-2-oxopropyl phosphate-binding positions include glycine 202 and 223 to 224 (GH).

This sequence belongs to the PNP synthase family. Homooctamer; tetramer of dimers.

It is found in the cytoplasm. The enzyme catalyses 3-amino-2-oxopropyl phosphate + 1-deoxy-D-xylulose 5-phosphate = pyridoxine 5'-phosphate + phosphate + 2 H2O + H(+). It participates in cofactor biosynthesis; pyridoxine 5'-phosphate biosynthesis; pyridoxine 5'-phosphate from D-erythrose 4-phosphate: step 5/5. In terms of biological role, catalyzes the complicated ring closure reaction between the two acyclic compounds 1-deoxy-D-xylulose-5-phosphate (DXP) and 3-amino-2-oxopropyl phosphate (1-amino-acetone-3-phosphate or AAP) to form pyridoxine 5'-phosphate (PNP) and inorganic phosphate. This chain is Pyridoxine 5'-phosphate synthase, found in Opitutus terrae (strain DSM 11246 / JCM 15787 / PB90-1).